Here is a 314-residue protein sequence, read N- to C-terminus: MDADKDNIKQACDERSAEMDDMRGEQSMGLVHEIMSENKELDEEIKKLEAELQSDAREFQIKENVPEKKLKLTSVESPKDGCHFSNSSCSFQVSSQILYELQEGQALITFEKEEVAQNVISMGNHVVQMEGTPVKVSAHPVPLNTGVRFQVHVDISKMKINVTGIPDELSEEQTRDKLELSFCKSRNGGGEVESVDYDRKSRSAVITFVETGVVDKILKKKTYPLYMNQKCHSVAVSPCIERCLEKYQVFSAVSKKTVLLTGLEGIPVDEETGEDLLNIHFQRKNNGGGEVEVVKCSLDQSFAAYFKEEARETI.

Residues 1–24 (MDADKDNIKQACDERSAEMDDMRG) are disordered. Ser-16 is modified (phosphoserine). A coiled-coil region spans residues 31 to 65 (VHEIMSENKELDEEIKKLEAELQSDAREFQIKENV). NID domains follow at residues 104–193 (GQAL…GEVE) and 202–293 (RSAV…EVEV).

This sequence belongs to the NMI family. As to quaternary structure, interacts with MYCN and MYC, as well as with other transcription factors with a Zip, HLH or a HLH-Zip motif. Interacts with all STAT proteins except STAT2. Interacts with IRF7, the interaction is direct and leads to the inhibition of IRF7-mediated type I IFN production. Interacts (via coiled-coil domain) with TRIM21 (via the SPRY domain); the interaction leads to 'Lys-63'-linked ubiquitination of NMI. Interacts with IFI35; the interaction is direct and is facilitated by TRIM21. Interacts with TLR4; the interaction is direct and leads to NF-kappa-B activation. May be ubiquitinated. As to expression, expressed in macrophages.

The protein resides in the cytoplasm. Its subcellular location is the nucleus. The protein localises to the secreted. In terms of biological role, acts as a signaling pathway regulator involved in innate immune system response. In response to interleukin 2/IL2 and interferon IFN-gamma/IFNG, interacts with signal transducer and activator of transcription/STAT which activate the transcription of downstream genes involved in a multitude of signals for development and homeostasis. Enhances the recruitment of CBP/p300 coactivators to STAT1 and STAT5, resulting in increased STAT1- and STAT5-dependent transcription. In response to interferon IFN-alpha, associates in a complex with transcriptional regulator IFI35 to regulate immune response; the complex formation prevents proteasome-mediated degradation of IFI35. In complex with IFI35, negatively regulates nuclear factor NF-kappa-B signaling by inhibiting the nuclear translocation, activation and transcription of NF-kappa-B subunit p65/RELA, resulting in the inhibition of endothelial cell proliferation, migration and re-endothelialization of injured arteries. Negatively regulates virus-triggered type I interferon/IFN production by inducing proteosome-dependent degradation of IRF7, a transcriptional regulator of type I IFN, thereby interfering with cellular antiviral responses. Beside its role as an intracellular signaling pathway regulator, also functions extracellularly as damage-associated molecular patterns (DAMPs) to promote inflammation, when actively released by macrophage to the extracellular space during cell injury or pathogen invasion. Macrophage-secreted NMI activates NF-kappa-B signaling in adjacent macrophages through Toll-like receptor 4/TLR4 binding and activation, thereby inducing NF-kappa-B translocation from the cytoplasm into the nucleus which promotes the release of pro-inflammatory cytokines. The protein is N-myc-interactor of Mus musculus (Mouse).